The following is a 102-amino-acid chain: Small ribosomal subunit protein uS10 (102 aa).

It belongs to the universal ribosomal protein uS10 family. Part of the 30S ribosomal subunit.

Functionally, involved in the binding of tRNA to the ribosomes. In Thermococcus kodakarensis (strain ATCC BAA-918 / JCM 12380 / KOD1) (Pyrococcus kodakaraensis (strain KOD1)), this protein is Small ribosomal subunit protein uS10.